Consider the following 332-residue polypeptide: Glycerol-3-phosphate dehydrogenase [NAD(P)+] (332 aa).

NADPH-binding residues include W13, R33, and K105. Residues K105, G134, and S136 each contribute to the sn-glycerol 3-phosphate site. A138 is an NADPH binding site. Residues K189, D242, S252, R253, and N254 each coordinate sn-glycerol 3-phosphate. Catalysis depends on K189, which acts as the Proton acceptor. R253 lines the NADPH pocket. E279 contributes to the NADPH binding site.

It belongs to the NAD-dependent glycerol-3-phosphate dehydrogenase family.

It localises to the cytoplasm. The enzyme catalyses sn-glycerol 3-phosphate + NAD(+) = dihydroxyacetone phosphate + NADH + H(+). It catalyses the reaction sn-glycerol 3-phosphate + NADP(+) = dihydroxyacetone phosphate + NADPH + H(+). The protein operates within membrane lipid metabolism; glycerophospholipid metabolism. Functionally, catalyzes the reduction of the glycolytic intermediate dihydroxyacetone phosphate (DHAP) to sn-glycerol 3-phosphate (G3P), the key precursor for phospholipid synthesis. In Halorhodospira halophila (strain DSM 244 / SL1) (Ectothiorhodospira halophila (strain DSM 244 / SL1)), this protein is Glycerol-3-phosphate dehydrogenase [NAD(P)+].